The chain runs to 670 residues: Methionine--tRNA ligase (670 aa).

A 'HIGH' region motif is present at residues 14–24 (PYANGHLHLGH). Residues Cys145, Cys148, Cys158, and Cys161 each contribute to the Zn(2+) site. Positions 330-334 (KMSKS) match the 'KMSKS' region motif. Lys333 contacts ATP. Residues 570 to 670 (DFAKVDLRIA…AGALPGMKVK (101 aa)) enclose the tRNA-binding domain.

The protein belongs to the class-I aminoacyl-tRNA synthetase family. MetG type 1 subfamily. As to quaternary structure, homodimer. The cofactor is Zn(2+).

It localises to the cytoplasm. The catalysed reaction is tRNA(Met) + L-methionine + ATP = L-methionyl-tRNA(Met) + AMP + diphosphate. Its function is as follows. Is required not only for elongation of protein synthesis but also for the initiation of all mRNA translation through initiator tRNA(fMet) aminoacylation. The chain is Methionine--tRNA ligase from Legionella pneumophila subsp. pneumophila (strain Philadelphia 1 / ATCC 33152 / DSM 7513).